The following is a 387-amino-acid chain: Major outer membrane protein P.IA (387 aa).

The signal sequence occupies residues 1–19 (MRKKLTALVLSALPLAAVA).

The protein belongs to the Gram-negative porin family. As to quaternary structure, homotrimer.

The protein localises to the cell outer membrane. Functionally, serves as a slightly cation selective porin. Major antigen on the gonococcal cell surface and it may have pathogenic properties in addition to its porin activity. The polypeptide is Major outer membrane protein P.IA (porA) (Neisseria meningitidis serogroup C).